An 85-amino-acid polypeptide reads, in one-letter code: F(1)-ATPase inhibitor IF(1), mitochondrial (85 aa).

A mitochondrion-targeting transit peptide spans 1–22 (MLPRSALARSLQLQRGVAARFY). Positions 41 to 84 (KRERATEDFFVRQREKEQLRHLKEQLEKQRKKIDSLENKIDSMT) form a coiled coil.

The protein belongs to the ATPase inhibitor family. As to quaternary structure, monomer and homodimer. The protein aggregates less strongly with increasing pH.

It localises to the mitochondrion. Its function is as follows. Endogenous ATPase inhibitor, which inhibits specifically the reverse ATPase reaction of mitochondrial F(1)F(0)-type ATP synthase. It limits ATP depletion when the mitochondrial membrane potential falls below a threshold and the F(1)F(0)-ATP synthase starts hydrolyzing ATP to pump protons out of the mitochondrial matrix. Required to avoid the consumption of cellular ATP when the F(1)F(0)-ATP synthase enzyme acts as an ATP hydrolase. Functions through inserting its N-terminal part into the catalytically active F1-ATPase, thereby blocking its rotational movement and subsequently the ATP hydrolase activity. This is F(1)-ATPase inhibitor IF(1), mitochondrial (INH1) from Saccharomyces cerevisiae (strain ATCC 204508 / S288c) (Baker's yeast).